The following is a 406-amino-acid chain: 4-hydroxy-3-methylbut-2-en-1-yl diphosphate synthase (flavodoxin) (406 aa).

Positions 297, 300, 343, and 350 each coordinate [4Fe-4S] cluster.

Belongs to the IspG family. In terms of assembly, homodimer. The cofactor is [4Fe-4S] cluster.

It catalyses the reaction (2E)-4-hydroxy-3-methylbut-2-enyl diphosphate + oxidized [flavodoxin] + H2O + 2 H(+) = 2-C-methyl-D-erythritol 2,4-cyclic diphosphate + reduced [flavodoxin]. It functions in the pathway isoprenoid biosynthesis; isopentenyl diphosphate biosynthesis via DXP pathway; isopentenyl diphosphate from 1-deoxy-D-xylulose 5-phosphate: step 5/6. In terms of biological role, converts 2C-methyl-D-erythritol 2,4-cyclodiphosphate (ME-2,4cPP) into 1-hydroxy-2-methyl-2-(E)-butenyl 4-diphosphate. This is 4-hydroxy-3-methylbut-2-en-1-yl diphosphate synthase (flavodoxin) from Thermus thermophilus (strain ATCC BAA-163 / DSM 7039 / HB27).